A 146-amino-acid polypeptide reads, in one-letter code: Hemoglobin subunit beta (146 aa).

At V1 the chain carries N-acetylvaline. In terms of domain architecture, Globin spans 2–146 (HLTPEEKNAV…VANALAHKYH (145 aa)). The residue at position 12 (T12) is a Phosphothreonine. Residue S44 is modified to Phosphoserine. At K59 the chain carries N6-acetyllysine. Residue H63 coordinates heme b. K82 carries the post-translational modification N6-acetyllysine. H92 serves as a coordination point for heme b. An S-nitrosocysteine modification is found at C93. K144 carries the post-translational modification N6-acetyllysine.

It belongs to the globin family. In terms of assembly, heterotetramer of two alpha chains and two beta chains. As to expression, red blood cells.

Involved in oxygen transport from the lung to the various peripheral tissues. This Theropithecus gelada (Gelada baboon) protein is Hemoglobin subunit beta (HBB).